We begin with the raw amino-acid sequence, 4450 residues long: Gramicidin S synthase 2 (4450 aa).

The segment at 467–1044 (DKTIHQLFTE…IQEISNYING (578 aa)) is domain 1 (proline-activating). Carrier domains follow at residues 971 to 1046 (VPTN…NGAK), 2006 to 2081 (APSS…ADGE), 3051 to 3126 (APRT…EETD), and 4089 to 4164 (APRN…THQE). O-(pantetheine 4'-phosphoryl)serine is present on residues Ser1006, Ser2041, Ser3086, and Ser4124. Positions 1521–2080 (DHVAVGWKDQ…SALAQYIADG (560 aa)) are domain 2 (valine-activating). A domain 3 (ornithine-activating) region spans residues 2538–3134 (YATNKIFHEL…TDTEQYMAIQ (597 aa)). Residues 3590–4172 (IQELFEEQVK…QESENNVHQP (583 aa)) form a domain 4 (leucine-activating) region.

The protein belongs to the ATP-dependent AMP-binding enzyme family. Large multienzyme complex of GrsA and GrsB. Pantetheine 4'-phosphate is required as a cofactor.

It participates in antibiotic biosynthesis; gramicidin S biosynthesis. Functionally, this protein is a multifunctional enzyme, able to activate and polymerize the amino acids Pro, Val, Orn and Leu. Activation sites for these AA consist of individual domains. The polypeptide is Gramicidin S synthase 2 (grsB) (Brevibacillus brevis (Bacillus brevis)).